The following is a 270-amino-acid chain: Acyl-[acyl-carrier-protein]--UDP-N-acetylglucosamine O-acyltransferase (270 aa).

This sequence belongs to the transferase hexapeptide repeat family. LpxA subfamily. As to quaternary structure, homotrimer.

It localises to the cytoplasm. The enzyme catalyses a (3R)-hydroxyacyl-[ACP] + UDP-N-acetyl-alpha-D-glucosamine = a UDP-3-O-[(3R)-3-hydroxyacyl]-N-acetyl-alpha-D-glucosamine + holo-[ACP]. It functions in the pathway glycolipid biosynthesis; lipid IV(A) biosynthesis; lipid IV(A) from (3R)-3-hydroxytetradecanoyl-[acyl-carrier-protein] and UDP-N-acetyl-alpha-D-glucosamine: step 1/6. Involved in the biosynthesis of lipid A, a phosphorylated glycolipid that anchors the lipopolysaccharide to the outer membrane of the cell. The polypeptide is Acyl-[acyl-carrier-protein]--UDP-N-acetylglucosamine O-acyltransferase (Helicobacter pylori (strain Shi470)).